A 253-amino-acid chain; its full sequence is Ubiquinone/menaquinone biosynthesis C-methyltransferase UbiE (253 aa).

S-adenosyl-L-methionine-binding positions include Thr76, Asp97, 125 to 126 (NA), and Ser142.

This sequence belongs to the class I-like SAM-binding methyltransferase superfamily. MenG/UbiE family.

It catalyses the reaction a 2-demethylmenaquinol + S-adenosyl-L-methionine = a menaquinol + S-adenosyl-L-homocysteine + H(+). The enzyme catalyses a 2-methoxy-6-(all-trans-polyprenyl)benzene-1,4-diol + S-adenosyl-L-methionine = a 5-methoxy-2-methyl-3-(all-trans-polyprenyl)benzene-1,4-diol + S-adenosyl-L-homocysteine + H(+). It functions in the pathway quinol/quinone metabolism; menaquinone biosynthesis; menaquinol from 1,4-dihydroxy-2-naphthoate: step 2/2. It participates in cofactor biosynthesis; ubiquinone biosynthesis. Functionally, methyltransferase required for the conversion of demethylmenaquinol (DMKH2) to menaquinol (MKH2) and the conversion of 2-polyprenyl-6-methoxy-1,4-benzoquinol (DDMQH2) to 2-polyprenyl-3-methyl-6-methoxy-1,4-benzoquinol (DMQH2). This is Ubiquinone/menaquinone biosynthesis C-methyltransferase UbiE from Xylella fastidiosa (strain 9a5c).